We begin with the raw amino-acid sequence, 202 residues long: Inosine triphosphate pyrophosphatase (202 aa).

Thr8–Lys13 lines the ITP pocket. Glu55 is a Mg(2+) binding site. ITP contacts are provided by residues Lys67, Asp83–Thr84, Lys100, Phe159–Asp162, Lys182, and His187–Arg188.

It belongs to the HAM1 NTPase family. Homodimer. Mg(2+) is required as a cofactor. It depends on Mn(2+) as a cofactor.

The protein localises to the cytoplasm. It localises to the nucleus. The enzyme catalyses ITP + H2O = IMP + diphosphate + H(+). It catalyses the reaction dITP + H2O = dIMP + diphosphate + H(+). It carries out the reaction XTP + H2O = XMP + diphosphate + H(+). In terms of biological role, pyrophosphatase that hydrolyzes non-canonical purine nucleotides such as inosine triphosphate (ITP), deoxyinosine triphosphate (dITP) or xanthosine 5'-triphosphate (XTP) to their respective monophosphate derivatives. The enzyme does not distinguish between the deoxy- and ribose forms. Probably excludes non-canonical purines from RNA and DNA precursor pools, thus preventing their incorporation into RNA and DNA and avoiding chromosomal lesions. This chain is Inosine triphosphate pyrophosphatase, found in Candida albicans (strain SC5314 / ATCC MYA-2876) (Yeast).